We begin with the raw amino-acid sequence, 699 residues long: tRNA wybutosine-synthesizing protein 4 (699 aa).

S-adenosyl-L-methionine-binding positions include R94, G120, D151, D197–L198, and E224.

It belongs to the methyltransferase superfamily. LCMT family.

It carries out the reaction 7-[(3S)-3-amino-3-carboxypropyl]wyosine(37) in tRNA(Phe) + S-adenosyl-L-methionine = 7-[(3S)-(3-amino-3-methoxycarbonyl)propyl]wyosine(37) in tRNA(Phe) + S-adenosyl-L-homocysteine. The catalysed reaction is 7-[(3S)-(3-amino-3-methoxycarbonyl)propyl]wyosine(37) in tRNA(Phe) + S-adenosyl-L-methionine + CO2 = wybutosine(37) in tRNA(Phe) + S-adenosyl-L-homocysteine + 2 H(+). It participates in tRNA modification; wybutosine-tRNA(Phe) biosynthesis. Probable S-adenosyl-L-methionine-dependent methyltransferase that acts as a component of the wybutosine biosynthesis pathway. Wybutosine is a hyper modified guanosine with a tricyclic base found at the 3'-position adjacent to the anticodon of eukaryotic phenylalanine tRNA. May methylate the carboxyl group of leucine residues to form alpha-leucine ester residues. The sequence is that of tRNA wybutosine-synthesizing protein 4 (PPM2) from Eremothecium gossypii (strain ATCC 10895 / CBS 109.51 / FGSC 9923 / NRRL Y-1056) (Yeast).